The primary structure comprises 180 residues: Large ribosomal subunit protein uL5 (180 aa).

It belongs to the universal ribosomal protein uL5 family. In terms of assembly, part of the 50S ribosomal subunit; part of the 5S rRNA/L5/L18/L25 subcomplex. Contacts the 5S rRNA and the P site tRNA. Forms a bridge to the 30S subunit in the 70S ribosome.

Functionally, this is one of the proteins that bind and probably mediate the attachment of the 5S RNA into the large ribosomal subunit, where it forms part of the central protuberance. In the 70S ribosome it contacts protein S13 of the 30S subunit (bridge B1b), connecting the 2 subunits; this bridge is implicated in subunit movement. Contacts the P site tRNA; the 5S rRNA and some of its associated proteins might help stabilize positioning of ribosome-bound tRNAs. This Stenotrophomonas maltophilia (strain K279a) protein is Large ribosomal subunit protein uL5.